We begin with the raw amino-acid sequence, 436 residues long: Glutamate-1-semialdehyde 2,1-aminomutase (436 aa).

K270 is subject to N6-(pyridoxal phosphate)lysine.

The protein belongs to the class-III pyridoxal-phosphate-dependent aminotransferase family. HemL subfamily. As to quaternary structure, homodimer. Requires pyridoxal 5'-phosphate as cofactor.

The protein localises to the cytoplasm. The enzyme catalyses (S)-4-amino-5-oxopentanoate = 5-aminolevulinate. The protein operates within porphyrin-containing compound metabolism; protoporphyrin-IX biosynthesis; 5-aminolevulinate from L-glutamyl-tRNA(Glu): step 2/2. This is Glutamate-1-semialdehyde 2,1-aminomutase from Cutibacterium acnes (strain DSM 16379 / KPA171202) (Propionibacterium acnes).